Here is a 176-residue protein sequence, read N- to C-terminus: RNA 2',3'-cyclic phosphodiesterase (176 aa).

Catalysis depends on H43, which acts as the Proton donor. 2 short sequence motifs (HXTX) span residues H43–L46 and H125–L128. H125 (proton acceptor) is an active-site residue.

This sequence belongs to the 2H phosphoesterase superfamily. ThpR family. As to quaternary structure, monomer.

It catalyses the reaction a 3'-end 2',3'-cyclophospho-ribonucleotide-RNA + H2O = a 3'-end 2'-phospho-ribonucleotide-RNA + H(+). Functionally, hydrolyzes RNA 2',3'-cyclic phosphodiester to an RNA 2'-phosphomonoester. In vitro, can also ligate 5' and 3' half-tRNA molecules with 2',3'-cyclic phosphate and 5'-hydroxyl termini, respectively, to the product containing the 2'-5' phosphodiester linkage. This reaction does not require ATP and is reversible. The chain is RNA 2',3'-cyclic phosphodiesterase from Escherichia coli (strain K12).